Consider the following 671-residue polypeptide: Anaphase-promoting complex subunit cut9 (671 aa).

The tract at residues methionine 1 to alanine 24 is disordered. 14 TPR repeats span residues arginine 83–threonine 114, proline 117–lysine 142, serine 150–leucine 173, leucine 198–valine 229, tyrosine 234–lysine 257, alanine 268–serine 296, aspartate 306–isoleucine 334, valine 341–arginine 368, alanine 373–methionine 402, glycine 407–arginine 435, leucine 442–leucine 470, proline 475–lysine 507, lysine 513–leucine 545, and alanine 550–isoleucine 579. The segment at asparagine 622–valine 643 is disordered.

In terms of assembly, the APC/C is composed of at least 13 subunits: apc1, apc2, nuc2, apc4, apc5, cut9, apc8, apc10, apc11, hcn1, apc13, apc14 and apc15. Homodimer. Interacts directly with nuc2 and hcn1. In terms of processing, phosphorylated.

The protein localises to the nucleus. Its function is as follows. Component of the anaphase-promoting complex/cyclosome (APC/C), a cell cycle-regulated E3 ubiquitin-protein ligase complex that controls progression through mitosis and the G1 phase of the cell cycle. The APC/C is thought to confer substrate specificity and, in the presence of ubiquitin-conjugating E2 enzymes, it catalyzes the formation of protein-ubiquitin conjugates that are subsequently degraded by the 26S proteasome. May play a pivotal role in the control of anaphase. The chain is Anaphase-promoting complex subunit cut9 (cut9) from Schizosaccharomyces pombe (strain 972 / ATCC 24843) (Fission yeast).